Here is a 356-residue protein sequence, read N- to C-terminus: A-type ATP synthase subunit C (356 aa).

Belongs to the V-ATPase V0D/AC39 subunit family. In terms of assembly, has multiple subunits with at least A(3), B(3), C, D, E, F, H, I and proteolipid K(x).

It localises to the cell membrane. Functionally, component of the A-type ATP synthase that produces ATP from ADP in the presence of a proton gradient across the membrane. This is A-type ATP synthase subunit C from Thermoplasma volcanium (strain ATCC 51530 / DSM 4299 / JCM 9571 / NBRC 15438 / GSS1).